The following is a 306-amino-acid chain: MADKIAVLLGGTSAERDVSLNSGAAVLAGLREGGIDAHPVDPQEVDVAQLKAMGFQKVFIALHGRGGEDGTLQGMLELLGLPYTGSGVMASALSMDKLRSKLLWQGAGLPVAPWVALTRAEFEKGLSEEQKARISALGLPLIVKPSREGSSVGMTKVVEENALQGALSLAFQHDDEILIEKWLCGPEFTVAIVGEEILPSIRIQPAGTFYDYEAKYLSDETQYFCPAGLEASQEAALQSLVLQAWKALGCTGWGRIDVMLDSDGQFYLLEANTSPGMTSHSLVPMAARQAGMSFSQLVVRILELAD.

The 203-residue stretch at 101–303 (KLLWQGAGLP…FSQLVVRILE (203 aa)) folds into the ATP-grasp domain. 134 to 189 (ISALGLPLIVKPSREGSSVGMTKVVEENALQGALSLAFQHDDEILIEKWLCGPEFT) lines the ATP pocket. Mg(2+) contacts are provided by Asp257, Glu270, and Asn272.

This sequence belongs to the D-alanine--D-alanine ligase family. Requires Mg(2+) as cofactor. Mn(2+) is required as a cofactor.

It is found in the cytoplasm. The enzyme catalyses 2 D-alanine + ATP = D-alanyl-D-alanine + ADP + phosphate + H(+). Its pathway is cell wall biogenesis; peptidoglycan biosynthesis. Its function is as follows. Cell wall formation. The chain is D-alanine--D-alanine ligase from Salmonella paratyphi A (strain ATCC 9150 / SARB42).